We begin with the raw amino-acid sequence, 1547 residues long: DNA topoisomerase 2 (1547 aa).

Residues 8–30 are disordered; that stretch reads FNKMSSPKQNGTGEPAPAKGQKG. Positions 9-19 are enriched in polar residues; it reads NKMSSPKQNGT. Residues Asn-99, Asn-128, 156–158, and 169–176 contribute to the ATP site; these read SSN and GRNGYGAK. The tract at residues 351 to 353 is interaction with DNA; sequence KKK. 385 to 387 provides a ligand contact to ATP; the sequence is QTK. The Toprim domain maps to 463–580; that stretch reads CTLILTEGDS…ELLKLPFLEE (118 aa). Mg(2+)-binding residues include Glu-469, Asp-549, and Asp-551. Residues 723–1192 form the Topo IIA-type catalytic domain; that stretch reads IPSMIDGLKP…TAPMLWREDL (470 aa). Catalysis depends on Tyr-813, which acts as the O-(5'-phospho-DNA)-tyrosine intermediate. The interaction with DNA stretch occupies residues 996 to 1005; that stretch reads KLQTTISMTC. Disordered stretches follow at residues 1107-1134, 1209-1249, 1261-1423, and 1459-1547; these read TALEDDDAQESEEEEPEPDPKGKPVDPD, EELN…ISDD, KTRK…MDSD, and RQRR…SLSD. The segment covering 1109–1123 has biased composition (acidic residues); that stretch reads LEDDDAQESEEEEPE. A compositionally biased stretch (basic and acidic residues) spans 1124–1134; sequence PDPKGKPVDPD. Positions 1216–1228 are enriched in basic residues; sequence KTSKAMAGKKNRK. Basic and acidic residues-rich tracts occupy residues 1238-1249 and 1294-1315; these read NGRRVEPKISDD and EKPEKAEKPDKVDKAEKTDGLK. Residues 1331-1344 are compositionally biased toward low complexity; it reads TFSGSSSGEMSASD. The span at 1373–1383 shows a compositional bias: acidic residues; sequence DDSGSDSEPEL. Basic and acidic residues-rich tracts occupy residues 1384-1394 and 1459-1488; these read LDNKIDSDHEA and RQRRCDTSVPPKEKAAPKRKLMNVDKDEKK. Residues 1513 to 1528 are compositionally biased toward basic residues; that stretch reads KGKKKTAANPKKKAKK. Polar residues predominate over residues 1537–1547; the sequence is DFNISDSSLSD.

The protein belongs to the type II topoisomerase family. Homodimer. Requires Mg(2+) as cofactor. Mn(2+) serves as cofactor. Ca(2+) is required as a cofactor.

Its subcellular location is the nucleus. The enzyme catalyses ATP-dependent breakage, passage and rejoining of double-stranded DNA.. Control of topological states of DNA by transient breakage and subsequent rejoining of DNA strands. Topoisomerase II makes double-strand breaks. This is DNA topoisomerase 2 (TOP2) from Bombyx mori (Silk moth).